An 815-amino-acid chain; its full sequence is cGMP-specific 3',5'-cyclic phosphodiesterase delta (815 aa).

Over 1-56 (MNEYNNDNMEQEKEKKKEEQKYKNIIKKEYFIFPRLYDKNKEIEYNKLRIHNIKEY) the chain is Cytoplasmic. A helical membrane pass occupies residues 57 to 77 (ICIHLTISLFIILIECFVFSF). The Extracellular portion of the chain corresponds to 78–86 (NLNIKDTTY). A helical membrane pass occupies residues 87-107 (VEICVVIFSILNCLMHIVVLI). Residues 108–120 (KMYFFTSESVYTK) lie on the Cytoplasmic side of the membrane. A helical transmembrane segment spans residues 121–141 (GVFIGYIVLNQVFQFLSLYFF). At 142–160 (TKRNEQSKNDIAHLKYYDN) the chain is on the extracellular side. Residues 161–181 (SFNLYVHFFVDSVFILCLPAL) traverse the membrane as a helical segment. Topologically, residues 182-183 (SF) are cytoplasmic. A helical membrane pass occupies residues 184–204 (FLSVLFMMMFLCLNILLINMI). The Extracellular segment spans residues 205 to 210 (KFNKTN). N-linked (GlcNAc...) asparagine glycosylation occurs at N207. The chain crosses the membrane as a helical span at residues 211-231 (YGSDIYHICLLSVVLLMFLIL). The Cytoplasmic portion of the chain corresponds to 232–815 (RYMMEERNRL…FKEEIKHGKL (584 aa)). Residues 384–762 (YEVEVLKNIK…QTWRLIEKNI (379 aa)) form the PDEase domain. The active-site Proton donor is the H459. 459–463 (HNANH) serves as a coordination point for 3',5'-cyclic GMP. A divalent metal cation contacts are provided by H463, H499, D500, and D616. The 3',5'-cyclic GMP site is built by D500, D616, and Q715.

The protein belongs to the cyclic nucleotide phosphodiesterase family. A divalent metal cation is required as a cofactor.

The protein resides in the membrane. It catalyses the reaction 3',5'-cyclic GMP + H2O = GMP + H(+). Its pathway is purine metabolism; 3',5'-cyclic GMP degradation; GMP from 3',5'-cyclic GMP: step 1/1. Its function is as follows. Specifically hydrolyzes the second messenger cGMP, which is a key regulator of many important physiological processes. Probably by regulating cGMP levels, required for activation of gametogenesis. This chain is cGMP-specific 3',5'-cyclic phosphodiesterase delta, found in Plasmodium falciparum (isolate 3D7).